Consider the following 436-residue polypeptide: Chorismate synthase, chloroplastic (436 aa).

The segment at 1–24 (MASSSLTSKSILGSTKLGSSSLPS) is disordered. The N-terminal 50 residues, 1 to 50 (MASSSLTSKSILGSTKLGSSSLPSELRRLSSPAVQISLRTQTRKNFQIQA), are a transit peptide targeting the chloroplast.

It belongs to the chorismate synthase family. Homotetramer. FMNH2 is required as a cofactor.

The protein localises to the plastid. Its subcellular location is the chloroplast. It catalyses the reaction 5-O-(1-carboxyvinyl)-3-phosphoshikimate = chorismate + phosphate. It functions in the pathway metabolic intermediate biosynthesis; chorismate biosynthesis; chorismate from D-erythrose 4-phosphate and phosphoenolpyruvate: step 7/7. Functionally, catalyzes the last common step of the biosynthesis of aromatic amino acids, produced via the shikimic acid pathway. The chain is Chorismate synthase, chloroplastic (EMB1144) from Arabidopsis thaliana (Mouse-ear cress).